The chain runs to 95 residues: uncharacterized protein (95 aa).

An N-terminal signal peptide occupies residues 1–17 (MTSSLVIYIFLWSRLIC).

This is an uncharacterized protein from Saccharomyces cerevisiae (strain ATCC 204508 / S288c) (Baker's yeast).